The following is a 593-amino-acid chain: Kelch-like protein 2 (593 aa).

The tract at residues 1 to 28 is disordered; the sequence is METPPLPPACTKQGHQKPLDSKDDNTEK. Basic and acidic residues predominate over residues 17–28; the sequence is KPLDSKDDNTEK. Residues 56-123 enclose the BTB domain; sequence CDVTIVAEDM…VYTAEIQVTE (68 aa). Kelch repeat units follow at residues 308–353, 354–400, 402–447, 449–496, 497–543, and 545–591; these read LMVV…YMAG, LVFA…VLNG, LYAV…VVGG, LYAV…VLNN, LLYA…AVNG, and LYVV…VIDK.

As to quaternary structure, component of the BCR(KLHL2) E3 ubiquitin ligase complex, at least composed of CUL3 and KLHL2 and RBX1. Binds actin. Interacts with KLHL12. Interacts (via N-terminus) with FYN (via SH3 domain). In terms of tissue distribution, ubiquitous. Detected throughout the brain.

The protein resides in the cytoplasm. It localises to the cytoskeleton. The protein localises to the cell projection. It is found in the ruffle. Its subcellular location is the lamellipodium. The protein resides in the cytosol. The protein operates within protein modification; protein ubiquitination. Substrate-specific adapter of a BCR (BTB-CUL3-RBX1) E3 ubiquitin ligase complex that mediates the ubiquitination of target proteins, such as NPTXR, WNK1, WNK3 and WNK4, leading most often to their proteasomal degradation. The BCR(KLHL2) complex catalyzes ubiquitination and degradation of NPTXR. Responsible for degradative ubiquitination of the WNK kinases WNK1, WNK3 and WNK4. Plays a role in the reorganization of the actin cytoskeleton. Promotes growth of cell projections in oligodendrocyte precursors. In Homo sapiens (Human), this protein is Kelch-like protein 2.